The sequence spans 76 residues: DNA gyrase inhibitor YacG (76 aa).

Zn(2+)-binding residues include Cys7, Cys10, Cys26, and Cys30.

The protein belongs to the DNA gyrase inhibitor YacG family. As to quaternary structure, interacts with GyrB. Requires Zn(2+) as cofactor.

In terms of biological role, inhibits all the catalytic activities of DNA gyrase by preventing its interaction with DNA. Acts by binding directly to the C-terminal domain of GyrB, which probably disrupts DNA binding by the gyrase. The chain is DNA gyrase inhibitor YacG from Pseudoalteromonas translucida (strain TAC 125).